The chain runs to 102 residues: RNA-binding protein Hfq (102 aa).

The Sm domain occupies 9–68; it reads DPFLNALRRERVPVSIYLVNGIKLQGQIESFDQFVILLKNTVSQMVYKHAISTVVPSRPV. The disordered stretch occupies residues 63 to 102; that stretch reads VPSRPVSHHSNNTGGGSNNYHHGSSPAPSSQPQQDSADAE. The span at 70–102 shows a compositional bias: low complexity; it reads HHSNNTGGGSNNYHHGSSPAPSSQPQQDSADAE.

This sequence belongs to the Hfq family. As to quaternary structure, homohexamer.

Functionally, RNA chaperone that binds small regulatory RNA (sRNAs) and mRNAs to facilitate mRNA translational regulation in response to envelope stress, environmental stress and changes in metabolite concentrations. Also binds with high specificity to tRNAs. The sequence is that of RNA-binding protein Hfq from Erwinia tasmaniensis (strain DSM 17950 / CFBP 7177 / CIP 109463 / NCPPB 4357 / Et1/99).